A 71-amino-acid chain; its full sequence is Non-structural protein 3x (71 aa).

This Canis lupus familiaris (Dog) protein is Non-structural protein 3x.